Consider the following 355-residue polypeptide: tRNA-specific 2-thiouridylase MnmA 1 (355 aa).

Residue 6–13 (LLSGGVDS) participates in ATP binding. The segment at 92–94 (NPD) is interaction with target base in tRNA. The active-site Nucleophile is cysteine 97. Cysteine 97 and cysteine 192 are joined by a disulfide. Glycine 120 is an ATP binding site. The segment at 142-144 (KDQ) is interaction with tRNA. Residue cysteine 192 is the Cysteine persulfide intermediate of the active site.

This sequence belongs to the MnmA/TRMU family.

It localises to the cytoplasm. It catalyses the reaction S-sulfanyl-L-cysteinyl-[protein] + uridine(34) in tRNA + AH2 + ATP = 2-thiouridine(34) in tRNA + L-cysteinyl-[protein] + A + AMP + diphosphate + H(+). Its function is as follows. Catalyzes the 2-thiolation of uridine at the wobble position (U34) of tRNA, leading to the formation of s(2)U34. The chain is tRNA-specific 2-thiouridylase MnmA 1 from Bacteroides thetaiotaomicron (strain ATCC 29148 / DSM 2079 / JCM 5827 / CCUG 10774 / NCTC 10582 / VPI-5482 / E50).